Here is a 92-residue protein sequence, read N- to C-terminus: Large ribosomal subunit protein eL43 (92 aa).

The Zn(2+) site is built by C39, C42, C57, and C60. A C4-type zinc finger spans residues 39–60; that stretch reads CSFCGKTKMKRRAVGIWHCGSC.

This sequence belongs to the eukaryotic ribosomal protein eL43 family. Component of the large ribosomal subunit.

The protein resides in the cytoplasm. Its function is as follows. Component of the large ribosomal subunit. The ribosome is a large ribonucleoprotein complex responsible for the synthesis of proteins in the cell. The chain is Large ribosomal subunit protein eL43 (Rpl37a) from Mus musculus (Mouse).